We begin with the raw amino-acid sequence, 506 residues long: Histidine ammonia-lyase (506 aa).

The 5-imidazolinone (Ala-Gly) cross-link spans 143 to 145 (ASG). At S144 the chain carries 2,3-didehydroalanine (Ser).

The protein belongs to the PAL/histidase family. Contains an active site 4-methylidene-imidazol-5-one (MIO), which is formed autocatalytically by cyclization and dehydration of residues Ala-Ser-Gly.

The protein resides in the cytoplasm. It catalyses the reaction L-histidine = trans-urocanate + NH4(+). Its pathway is amino-acid degradation; L-histidine degradation into L-glutamate; N-formimidoyl-L-glutamate from L-histidine: step 1/3. The protein is Histidine ammonia-lyase of Salmonella paratyphi A (strain ATCC 9150 / SARB42).